Reading from the N-terminus, the 240-residue chain is MTATRRVSRPGPVRWMVYLGAVVAIAWLATQAFYFGQIAVWNYVNPQSTSFMRSDTWRLSQDRPDLSVQHTWVSYDQISRNLKRAIIASEDANFVNNNGYETDAILQAWERNKAKGKIVRGGSTITQQLARNLFLSREKSYIRKGQELIITWMLETLMDKERIFEIYLNSVEWGNGVYGAEAAAHYYYKTSASKLTAAQSARLAVMLPQPKYFDEHRGSQYLAQRARVIARRMGAAELPD.

A helical membrane pass occupies residues 15-35; that stretch reads WMVYLGAVVAIAWLATQAFYF.

Belongs to the glycosyltransferase 51 family.

Its subcellular location is the cell inner membrane. It carries out the reaction [GlcNAc-(1-&gt;4)-Mur2Ac(oyl-L-Ala-gamma-D-Glu-L-Lys-D-Ala-D-Ala)](n)-di-trans,octa-cis-undecaprenyl diphosphate + beta-D-GlcNAc-(1-&gt;4)-Mur2Ac(oyl-L-Ala-gamma-D-Glu-L-Lys-D-Ala-D-Ala)-di-trans,octa-cis-undecaprenyl diphosphate = [GlcNAc-(1-&gt;4)-Mur2Ac(oyl-L-Ala-gamma-D-Glu-L-Lys-D-Ala-D-Ala)](n+1)-di-trans,octa-cis-undecaprenyl diphosphate + di-trans,octa-cis-undecaprenyl diphosphate + H(+). It functions in the pathway cell wall biogenesis; peptidoglycan biosynthesis. Peptidoglycan polymerase that catalyzes glycan chain elongation from lipid-linked precursors. The protein is Biosynthetic peptidoglycan transglycosylase of Paraburkholderia phytofirmans (strain DSM 17436 / LMG 22146 / PsJN) (Burkholderia phytofirmans).